A 428-amino-acid polypeptide reads, in one-letter code: Adenylosuccinate synthetase (428 aa).

Residues Gly12–Lys18 and Gly40–Thr42 contribute to the GTP site. Asp13 (proton acceptor) is an active-site residue. Positions 13 and 40 each coordinate Mg(2+). IMP contacts are provided by residues Asp13 to Lys16, Asn38 to His41, Thr130, Arg144, Gln225, Thr240, and Arg304. Residue His41 is the Proton donor of the active site. Val300 to Arg306 provides a ligand contact to substrate. Residues Arg306, Lys332–Asp334, and Gly414–Gly416 contribute to the GTP site.

The protein belongs to the adenylosuccinate synthetase family. Homodimer. Requires Mg(2+) as cofactor.

It is found in the cytoplasm. The catalysed reaction is IMP + L-aspartate + GTP = N(6)-(1,2-dicarboxyethyl)-AMP + GDP + phosphate + 2 H(+). Its pathway is purine metabolism; AMP biosynthesis via de novo pathway; AMP from IMP: step 1/2. Plays an important role in the de novo pathway of purine nucleotide biosynthesis. Catalyzes the first committed step in the biosynthesis of AMP from IMP. This is Adenylosuccinate synthetase from Clostridium botulinum (strain Eklund 17B / Type B).